Here is a 950-residue protein sequence, read N- to C-terminus: Protein translocase subunit SecA 1 (950 aa).

ATP is bound by residues Gln-83, 101–105 (GEGKT), and Asp-490. A disordered region spans residues 864–950 (EGGAGRKNAA…AKPPKSVKKR (87 aa)). The segment covering 873–888 (AAREEAPSRLRAKGIE) has biased composition (basic and acidic residues).

The protein belongs to the SecA family. In terms of assembly, monomer and homodimer. Part of the essential Sec protein translocation apparatus which comprises SecA, SecYEG and auxiliary proteins SecDF. Other proteins may also be involved.

The protein localises to the cell membrane. Its subcellular location is the cytoplasm. It catalyses the reaction ATP + H2O + cellular proteinSide 1 = ADP + phosphate + cellular proteinSide 2.. In terms of biological role, part of the Sec protein translocase complex. Interacts with the SecYEG preprotein conducting channel. Has a central role in coupling the hydrolysis of ATP to the transfer of proteins into and across the cell membrane, serving as an ATP-driven molecular motor driving the stepwise translocation of polypeptide chains across the membrane. This Mycobacterium ulcerans (strain Agy99) protein is Protein translocase subunit SecA 1.